Here is a 499-residue protein sequence, read N- to C-terminus: Serine carboxypeptidase 1 (499 aa).

A signal peptide spans 1–30 (MARCRRRSGCTAGAALLLLLALALSGGGGA). 3 disulfides stabilise this stretch: C92/C388, C256/C268, and C291/C355. Residue N148 is glycosylated (N-linked (GlcNAc...) asparagine). The active site involves S188. The N-linked (GlcNAc...) asparagine glycan is linked to N262. Positions 297-351 (IKEVNLQNSKLPQSFKDLGTTNKPFPVRTRMLGRAWPLRAPVKAGRVPSWQEVAS) are cleaved as a propeptide — linker peptide. N407 is a glycosylation site (N-linked (GlcNAc...) asparagine). Catalysis depends on residues D423 and H476. The Microbody targeting signal motif lies at 497 to 499 (SKL).

It belongs to the peptidase S10 family. In terms of assembly, carboxypeptidase I is a dimer, where each monomer is composed of two chains linked by disulfide bonds. In terms of processing, the linker peptide is endoproteolytically excised during enzyme maturation.

It is found in the secreted. The enzyme catalyses Release of a C-terminal amino acid with broad specificity.. In terms of biological role, may be involved in the degradation of small peptides (2-5 residues) or in the degradation of storage proteins in the embryo. This Hordeum vulgare (Barley) protein is Serine carboxypeptidase 1 (CBP1).